The chain runs to 1235 residues: MLFVFILLLPSCLGYIGDFRCIQTVNYNGNNASAPSISTEAVDVSKGRGTYYVLDRVYLNATLLLTGYYPVDGSNYRNLALTGTNTLSLTWFKPPFLSEFNDGIFAKVQNLKTNTPTGATSYFPTIVIGSLFGNTSYTVVLEPYNNIIMASVCTYTICQLPYTPCKPNTNGNRVIGFWHTDVKPPICLLKRNFTFNVNAPWLYFHFYQQGGTFYAYYADKPSATTFLFSVYIGDILTQYFVLPFICTPTAGSTLAPLYWVTPLLKRQYLFNFNEKGVITSAVDCASSYISEIKCKTQSLLPSTGVYDLSGYTVQPVGVVYRRVPNLPDCKIEEWLTAKSVPSPLNWERRTFQNCNFNLSSLLRYVQAESLSCNNIDASKVYGMCFGSVSVDKFAIPRSRQIDLQIGNSGFLQTANYKIDTAATSCQLYYSLPKNNVTINNYNPSSWNRRYGFKVNDRCQIFANILLNGINSGTTCSTDLQLPNTEVATGVCVRYDLYGITGQGVFKEVKADYYNSWQALLYDVNGNLNGFRDLTTNKTYTIRSCYSGRVSAAYHKEAPEPALLYRNINCSYVFTNNISREENPLNYFDSYLGCVVNADNRTDEALPNCNLRMGAGLCVDYSKSRRARRSVSTGYRLTTFEPYMPMLVNDSVQSVGGLYEMQIPTNFTIGHHEEFIQIRAPKVTIDCAAFVCGDNAACRQQLVEYGSFCDNVNAILNEVNNLLDNMQLQVASALMQGVTISSRLPDGISGPIDDINFSPLLGCIGSTCAEDGNGPSAIRGRSAIEDLLFDKVKLSDVGFVEAYNNCTGGQEVRDLLCVQSFNGIKVLPPVLSESQISGYTAGATAAAMFPPWTAAAGVPFSLNVQYRINGLGVTMNVLSENQKMIASAFNNALGAIQEGFDATNSALGKIQSVVNANAEALNNLLNQLSNRFGAISASLQEILTRLDAVEAKAQIDRLINGRLTALNAYISKQLSDSTLIKFSAAQAIEKVNECVKSQTTRINFCGNGNHILSLVQNAPYGLCFIHFSYVPTSFKTANVSPGLCISGDRGLAPKAGYFVQDNGEWKFTGSNYYYPEPITDKNSVAMISCAVNYTKAPEVFLNNSIPNLPDFKEELDKWFKNQTSIAPDLSLDFEKLNVTFLDLTYEMNRIQDAIKKLNESYINLKEVGTYEMYVKWPWYVWLLIGLAGVAVCVLLFFICCCTGCGSCCFRKCGSCCDEYGGHQDSIVIHNISAHED.

The signal sequence occupies residues 1–13 (MLFVFILLLPSCL). Residues 1 to 330 (MLFVFILLLP…RRVPNLPDCK (330 aa)) are receptor binding site. Residues 14 to 1176 (GYIGDFRCIQ…GTYEMYVKWP (1163 aa)) lie on the Extracellular side of the membrane. The region spanning 15 to 296 (YIGDFRCIQT…SYISEIKCKT (282 aa)) is the BetaCoV S1-NTD domain. 5 disulfide bridges follow: Cys21–Cys158, Cys153–Cys187, Cys165–Cys246, Cys284–Cys294, and Cys329–Cys354. 3 N-linked (GlcNAc...) asparagine; by host glycosylation sites follow: Asn31, Asn60, and Asn134. The N-linked (GlcNAc...) asparagine; by host glycan is linked to Asn192. One can recognise a BetaCoV S1-CTD domain in the interval 327 to 477 (PDCKIEEWLT…GINSGTTCST (151 aa)). N-linked (GlcNAc...) asparagine; by host glycosylation is present at Asn357. 2 disulfides stabilise this stretch: Cys372–Cys425 and Cys384–Cys475. 7 N-linked (GlcNAc...) asparagine; by host glycosylation sites follow: Asn435, Asn536, Asn568, Asn576, Asn599, Asn648, and Asn665. Fusion peptide regions lie at residues 781 to 802 (SAIE…VEAY) and 800 to 820 (EAYN…VQSF). A glycan (N-linked (GlcNAc...) asparagine; by host) is linked at Asn804. The cysteines at positions 805 and 816 are disulfide-linked. Residues 881 to 931 (QKMIASAFNNALGAIQEGFDATNSALGKIQSVVNANAEALNNLLNQLSNRF) form a heptad repeat 1 region. A coiled-coil region spans residues 910 to 954 (QSVVNANAEALNNLLNQLSNRFGAISASLQEILTRLDAVEAKAQI). 5 N-linked (GlcNAc...) asparagine; by host glycosylation sites follow: Asn1091, Asn1101, Asn1120, Asn1136, and Asn1157. The interval 1125-1165 (APDLSLDFEKLNVTFLDLTYEMNRIQDAIKKLNESYINLKE) is heptad repeat 2. Positions 1138–1166 (TFLDLTYEMNRIQDAIKKLNESYINLKEV) form a coiled coil. Residues 1177–1197 (WYVWLLIGLAGVAVCVLLFFI) form a helical membrane-spanning segment. Residues 1198–1235 (CCCTGCGSCCFRKCGSCCDEYGGHQDSIVIHNISAHED) are Cytoplasmic-facing. A KxHxx motif is present at residues 1231–1235 (SAHED).

Belongs to the betacoronaviruses spike protein family. Homotrimer; each monomer consists of a S1 and a S2 subunit. The resulting peplomers protrude from the virus surface as spikes. Post-translationally, specific enzymatic cleavages in vivo yield mature proteins. The precursor is processed into S1 and S2 by host cell furin or another cellular protease to yield the mature S1 and S2 proteins. Additionally, a second cleavage leads to the release of a fusion peptide after viral attachment to host cell receptor. In terms of processing, the cytoplasmic Cys-rich domain is palmitoylated. Spike glycoprotein is digested within host endosomes.

Its subcellular location is the virion membrane. It localises to the host endoplasmic reticulum-Golgi intermediate compartment membrane. The protein localises to the host cell membrane. Attaches the virion to the cell membrane by interacting with host receptor, initiating the infection. Functionally, mediates fusion of the virion and cellular membranes by acting as a class I viral fusion protein. Under the current model, the protein has at least three conformational states: pre-fusion native state, pre-hairpin intermediate state, and post-fusion hairpin state. During viral and target cell membrane fusion, the coiled coil regions (heptad repeats) assume a trimer-of-hairpins structure, positioning the fusion peptide in close proximity to the C-terminal region of the ectodomain. The formation of this structure appears to drive apposition and subsequent fusion of viral and target cell membranes. In terms of biological role, acts as a viral fusion peptide which is unmasked following S2 cleavage occurring upon virus endocytosis. This chain is Spike glycoprotein, found in Mus musculus (Mouse).